A 56-amino-acid chain; its full sequence is Meucin-25 (56 aa).

An N-terminal signal peptide occupies residues 1–31 (MFRIEYSLVQLLLRNVTIPLLLIIQMHIMSS).

This sequence belongs to the non-disulfide-bridged peptide (NDBP) superfamily. Antimalarial peptide (group 5) family. Expressed by the venom gland.

It is found in the secreted. Functionally, this synthetic cationic peptide inhibits the development of Plasmodium berghei ookinetes, kills intraerythrocytic P.falciparum, and is cytotoxic to the Drosophila S2 cell at micromolar concentrations. No antibacterial, antifungal and hemolytic activities have been found at micromolar concentrations. The protein is Meucin-25 of Mesobuthus eupeus (Lesser Asian scorpion).